The sequence spans 347 residues: 4-hydroxy-2-oxovalerate aldolase 2 (347 aa).

Residues 7-259 (VRITDTSLRD…KTGIDFFDIA (253 aa)) enclose the Pyruvate carboxyltransferase domain. Substrate is bound at residue 15 to 16 (RD). Aspartate 16 is a binding site for Mn(2+). The active-site Proton acceptor is histidine 19. Substrate-binding residues include serine 169 and histidine 198. The Mn(2+) site is built by histidine 198 and histidine 200. Substrate is bound at residue tyrosine 289.

This sequence belongs to the 4-hydroxy-2-oxovalerate aldolase family.

The catalysed reaction is (S)-4-hydroxy-2-oxopentanoate = acetaldehyde + pyruvate. The protein is 4-hydroxy-2-oxovalerate aldolase 2 of Mycobacterium ulcerans (strain Agy99).